A 467-amino-acid polypeptide reads, in one-letter code: MIDIVLNTIHKYNMINKGDKIIVGVSGGPDSMCLLHILYRLRDEYNLNIIAAHINHCLRGKDADNDEKYVENFCKKYDIDFYSTKIDVGKLAKKENISFEVAGRECRYDFFNKLKLKFNCDKIALAHNSNDQCETILMRIMRGTGIEGLAGIKAIRDNIYIRPIIEASRKQIEDYCEEHELEARIDKTNLESIYARNKVRLELIPYIQENFNQDIIAVINRMGNNIDVDREYLDFASDKKFYQFCTSTKYEVVIKKEAFLEHKAITSRIIRRSINRLKGNLYNFERVHVEDILNLQKGSTGKFITLPEKIKALNNYGDIHIFFEEFSDNKGENKEKEQILEIGNNIINSNIKVQIELTNEIHKDIMGKDVYVKYFDFDKINGNIMFRYRKDGDRFTSLGMKGSKKIKDLFIDFKIPKHLRDYVPLICFGNEIAWIVGYRISEKFKVEKNTKNILKIKIEGEKENELV.

26–31 is an ATP binding site; the sequence is SGGPDS.

The protein belongs to the tRNA(Ile)-lysidine synthase family.

The protein localises to the cytoplasm. The catalysed reaction is cytidine(34) in tRNA(Ile2) + L-lysine + ATP = lysidine(34) in tRNA(Ile2) + AMP + diphosphate + H(+). Ligates lysine onto the cytidine present at position 34 of the AUA codon-specific tRNA(Ile) that contains the anticodon CAU, in an ATP-dependent manner. Cytidine is converted to lysidine, thus changing the amino acid specificity of the tRNA from methionine to isoleucine. This chain is tRNA(Ile)-lysidine synthase, found in Clostridium tetani (strain Massachusetts / E88).